The following is a 217-amino-acid chain: Adenylate kinase (217 aa).

10 to 15 (GIGKGT) is a binding site for ATP. The NMP stretch occupies residues 30–59 (ATGDIFRKNFKENTELGILIKKIIAQGLLV). AMP is bound by residues Thr31, Arg36, 57 to 59 (LLV), 85 to 88 (GFPR), and Gln92. The interval 126–163 (GRRICPECGKVYHIENIPPKTPGICDKDQKTLIQREDD) is LID. Arg127 provides a ligand contact to ATP. Cys130 and Cys133 together coordinate Zn(2+). Residue 136–137 (VY) coordinates ATP. Zn(2+) is bound by residues Cys150 and Asp153. Residues Arg160 and Arg171 each coordinate AMP. Gln199 is an ATP binding site.

The protein belongs to the adenylate kinase family. In terms of assembly, monomer.

It localises to the cytoplasm. It carries out the reaction AMP + ATP = 2 ADP. It functions in the pathway purine metabolism; AMP biosynthesis via salvage pathway; AMP from ADP: step 1/1. Functionally, catalyzes the reversible transfer of the terminal phosphate group between ATP and AMP. Plays an important role in cellular energy homeostasis and in adenine nucleotide metabolism. The sequence is that of Adenylate kinase from Onion yellows phytoplasma (strain OY-M).